The chain runs to 794 residues: MASPTLSPDSSSQEALSAPTCSPTSDSENLSPDELELLAKLEEQNRLLEADSKSMRSMNGSRRNSGSSLVSSSSASSNLSHLEEDTWILWGRIANEWEEWRRRKEKLLKELIRKGIPHHFRAIVWQLLCSATDMPVKNQYSELLKMSSPCEKLIRRDIARTYPEHEFFKGQDSLGQEVLFNVMKAYSLVDREVGYCQGSAFIVGLLLMQMPEEEAFCVFVRLMQEYRLRELFKPSMAELGLCIYQFEYMLQEQLPDLNTHFRSQSFHTSMYASSWFLTLFLTTFPLPVATRVFDIFMYEGLEIVFRVGLALLQVNQAELMQLDMEGMSQYFQRVIPHQFDSCPDKLVLKAYQVKYNPKKMKRLEKEYAAMKSKEMEEQIEIKRLRTENRLLKQRIETLEKGQVTRAQEAEENYVIKRELAVVRQQCSSAAEDLQKAQSTIRQLQEQQENPRLTEDFVSHLETELEQSRLRETETLGALREMQDKVLDMEKRNSSLPDENNVAQLQEELKALKVREGQAVASTRELKLQLQELSDTWQAHLARGGRWKESPRKLVVGELQDELMSVRLREAQALAEGRELRQRVVELETQDHIHRNLLNRVEAERAALQEKLQYLAAQNKGLQTQLSESRRKQAEAECKSKEEVMAVRLREADSMAAVAEMRQRIAELEIQREEGRIQGQLNHSDSSQYIRELKDQIEELKAEVRLLKGPPPFEDPLAFDGLSLARHLDEDSLPSSDEELLGVGVGAALQDALYPLSPRDARFFRRLERPAKDSEGSSDSDADELAAPYSQGLDN.

A compositionally biased stretch (polar residues) spans 1–30 (MASPTLSPDSSSQEALSAPTCSPTSDSENL). Disordered regions lie at residues 1-36 (MASP…DELE) and 49-75 (EADS…SSSA). Over residues 55 to 75 (MRSMNGSRRNSGSSLVSSSSA) the composition is skewed to low complexity. In terms of domain architecture, Rab-GAP TBC spans 115 to 300 (GIPHHFRAIV…RVFDIFMYEG (186 aa)). Coiled coils occupy residues 358–449 (KKMK…QQEN) and 569–709 (EAQA…LKGP). Ser685 carries the post-translational modification Phosphoserine. The tract at residues 766–794 (LERPAKDSEGSSDSDADELAAPYSQGLDN) is disordered.

May interact with RAB10.

In terms of biological role, functions as a GTPase-activating protein (GAP) with a broad specificity. The polypeptide is EVI5-like protein (EVI5L) (Homo sapiens (Human)).